Here is a 316-residue protein sequence, read N- to C-terminus: Beta-ketoacyl-[acyl-carrier-protein] synthase III 1 (316 aa).

Residues C112 and H243 contribute to the active site. The segment at 244–248 is ACP-binding; that stretch reads QANYR. N273 is an active-site residue.

It belongs to the thiolase-like superfamily. FabH family. Homodimer.

Its subcellular location is the cytoplasm. The enzyme catalyses malonyl-[ACP] + acetyl-CoA + H(+) = 3-oxobutanoyl-[ACP] + CO2 + CoA. It functions in the pathway lipid metabolism; fatty acid biosynthesis. In terms of biological role, catalyzes the condensation reaction of fatty acid synthesis by the addition to an acyl acceptor of two carbons from malonyl-ACP. Catalyzes the first condensation reaction which initiates fatty acid synthesis and may therefore play a role in governing the total rate of fatty acid production. Possesses both acetoacetyl-ACP synthase and acetyl transacylase activities. Its substrate specificity determines the biosynthesis of branched-chain and/or straight-chain of fatty acids. In Vibrio cholerae serotype O1 (strain ATCC 39315 / El Tor Inaba N16961), this protein is Beta-ketoacyl-[acyl-carrier-protein] synthase III 1.